The chain runs to 232 residues: Large ribosomal subunit protein uL1 (232 aa).

This sequence belongs to the universal ribosomal protein uL1 family. Part of the 50S ribosomal subunit.

In terms of biological role, binds directly to 23S rRNA. The L1 stalk is quite mobile in the ribosome, and is involved in E site tRNA release. Protein L1 is also a translational repressor protein, it controls the translation of the L11 operon by binding to its mRNA. The sequence is that of Large ribosomal subunit protein uL1 from Chlamydia pneumoniae (Chlamydophila pneumoniae).